The primary structure comprises 282 residues: Bifunctional protein FolD (282 aa).

Residues 165–167 (GAS) and I231 contribute to the NADP(+) site.

The protein belongs to the tetrahydrofolate dehydrogenase/cyclohydrolase family. As to quaternary structure, homodimer.

The catalysed reaction is (6R)-5,10-methylene-5,6,7,8-tetrahydrofolate + NADP(+) = (6R)-5,10-methenyltetrahydrofolate + NADPH. It carries out the reaction (6R)-5,10-methenyltetrahydrofolate + H2O = (6R)-10-formyltetrahydrofolate + H(+). It functions in the pathway one-carbon metabolism; tetrahydrofolate interconversion. In terms of biological role, catalyzes the oxidation of 5,10-methylenetetrahydrofolate to 5,10-methenyltetrahydrofolate and then the hydrolysis of 5,10-methenyltetrahydrofolate to 10-formyltetrahydrofolate. This chain is Bifunctional protein FolD, found in Francisella philomiragia subsp. philomiragia (strain ATCC 25017 / CCUG 19701 / FSC 153 / O#319-036).